The following is a 107-amino-acid chain: Iron-sulfur cluster assembly protein CyaY (107 aa).

The protein belongs to the frataxin family.

Functionally, involved in iron-sulfur (Fe-S) cluster assembly. May act as a regulator of Fe-S biogenesis. In Thioalkalivibrio sulfidiphilus (strain HL-EbGR7), this protein is Iron-sulfur cluster assembly protein CyaY.